The chain runs to 244 residues: DNA repair protein RecO (244 aa).

It belongs to the RecO family.

Involved in DNA repair and RecF pathway recombination. This chain is DNA repair protein RecO, found in Caldicellulosiruptor saccharolyticus (strain ATCC 43494 / DSM 8903 / Tp8T 6331).